The sequence spans 91 residues: Small ribosomal subunit protein bS18 (91 aa).

The protein belongs to the bacterial ribosomal protein bS18 family. Part of the 30S ribosomal subunit. Forms a tight heterodimer with protein bS6.

Functionally, binds as a heterodimer with protein bS6 to the central domain of the 16S rRNA, where it helps stabilize the platform of the 30S subunit. In Syntrophotalea carbinolica (strain DSM 2380 / NBRC 103641 / GraBd1) (Pelobacter carbinolicus), this protein is Small ribosomal subunit protein bS18.